The chain runs to 37 residues: Large ribosomal subunit protein bL36 (37 aa).

Belongs to the bacterial ribosomal protein bL36 family.

The chain is Large ribosomal subunit protein bL36 from Mycoplasmopsis synoviae (strain 53) (Mycoplasma synoviae).